The following is a 362-amino-acid chain: Chorismate synthase (362 aa).

Arg-48 and Arg-54 together coordinate NADP(+). FMN contacts are provided by residues 131–133 (RSS), 243–244 (NA), Gly-287, 302–306 (KPTSS), and Arg-328.

The protein belongs to the chorismate synthase family. Homotetramer. Requires FMNH2 as cofactor.

It catalyses the reaction 5-O-(1-carboxyvinyl)-3-phosphoshikimate = chorismate + phosphate. Its pathway is metabolic intermediate biosynthesis; chorismate biosynthesis; chorismate from D-erythrose 4-phosphate and phosphoenolpyruvate: step 7/7. Catalyzes the anti-1,4-elimination of the C-3 phosphate and the C-6 proR hydrogen from 5-enolpyruvylshikimate-3-phosphate (EPSP) to yield chorismate, which is the branch point compound that serves as the starting substrate for the three terminal pathways of aromatic amino acid biosynthesis. This reaction introduces a second double bond into the aromatic ring system. This chain is Chorismate synthase, found in Rhodopseudomonas palustris (strain ATCC BAA-98 / CGA009).